The following is a 327-amino-acid chain: Cytochrome f (327 aa).

An N-terminal signal peptide occupies residues 1 to 24 (MKRIYLALCALLLLLGTGSRPAAA). 4 residues coordinate heme: Y25, C45, C48, and H49. A helical membrane pass occupies residues 293–313 (VKWLVAFLAAVAITQLLLVLK).

Belongs to the cytochrome f family. As to quaternary structure, the 4 large subunits of the cytochrome b6-f complex are cytochrome b6, subunit IV (17 kDa polypeptide, PetD), cytochrome f and the Rieske protein, while the 4 small subunits are PetG, PetL, PetM and PetN. The complex functions as a dimer. It depends on heme as a cofactor.

The protein resides in the cellular thylakoid membrane. Functionally, component of the cytochrome b6-f complex, which mediates electron transfer between photosystem II (PSII) and photosystem I (PSI), cyclic electron flow around PSI, and state transitions. The sequence is that of Cytochrome f from Synechococcus sp. (strain JA-3-3Ab) (Cyanobacteria bacterium Yellowstone A-Prime).